The following is a 309-amino-acid chain: MSKNNGKGAKGEFEFPQPAKKQTFSEMIYNPQEGTFFGRTGKSWSQLLLFYTIFYIVLAALFTICMQGLLSTISDTEPKWKLQDSLIGTNPGLGFRPLSEQTERGSVIAFDGKKPAESDYWIELIDDFLRDYNHTEGRDMKHCGFGQVLEPTDVCVVNTDLFGGCSKANNYGYKTNQPCIFLKLNKIFGWIPEVYDKEEKDMPDDLKKVINETKTEERQQVWVSCNGHLGKDKENFQNIRYFPSQGFPSYYYPFLNQPGYLSPLVAVQFNSPPKGQMLDVECRAWAKNIQYSGSVRDRKGSVTFQILLD.

The Cytoplasmic segment spans residues 1 to 45 (MSKNNGKGAKGEFEFPQPAKKQTFSEMIYNPQEGTFFGRTGKSWS). Residues 46–66 (QLLLFYTIFYIVLAALFTICM) traverse the membrane as a helical; Signal-anchor for type II membrane protein segment. Topologically, residues 67-309 (QGLLSTISDT…GSVTFQILLD (243 aa)) are extracellular. Asn-133 is a glycosylation site (N-linked (GlcNAc...) asparagine). Intrachain disulfides connect Cys-143/Cys-155 and Cys-165/Cys-179. N-linked (GlcNAc...) asparagine glycosylation occurs at Asn-211. Cysteines 225 and 282 form a disulfide.

It belongs to the X(+)/potassium ATPases subunit beta family. The sodium/potassium-transporting ATPase is composed of a catalytic alpha subunit, an auxiliary non-catalytic beta subunit and an additional regulatory subunit. Interacts with nkain. In embryos, it is expressed in the neurons of the CNS and PNS, in Garland cells and posterior spiracles. In adults, it is concentrated in the thorax and abdomen (muscle tissue, digestive system and Malpighian tubules) and weakly expressed in the head. Expression is diffuse in the nervous system.

It localises to the cell membrane. Functionally, this is the non-catalytic component of the active enzyme, which catalyzes the hydrolysis of ATP coupled with the exchange of Na(+) and K(+) ions across the plasma membrane. The beta subunit regulates, through assembly of alpha/beta heterodimers, the number of sodium pumps transported to the plasma membrane. The protein is Sodium/potassium-transporting ATPase subunit beta-1 (nrv1) of Drosophila melanogaster (Fruit fly).